Reading from the N-terminus, the 450-residue chain is Phosphoglucosamine mutase (450 aa).

The active-site Phosphoserine intermediate is the Ser-101. Mg(2+) is bound by residues Ser-101, Asp-241, Asp-243, and Asp-245. Ser-101 is modified (phosphoserine).

This sequence belongs to the phosphohexose mutase family. It depends on Mg(2+) as a cofactor. Activated by phosphorylation.

It carries out the reaction alpha-D-glucosamine 1-phosphate = D-glucosamine 6-phosphate. In terms of biological role, catalyzes the conversion of glucosamine-6-phosphate to glucosamine-1-phosphate. The protein is Phosphoglucosamine mutase of Ligilactobacillus salivarius (strain UCC118) (Lactobacillus salivarius).